The following is a 409-amino-acid chain: AP-1-like transcription factor YAP2 (409 aa).

2 short sequence motifs (bipartite nuclear localization signal) span residues 17–24 and 47–54; these read MKKQMLLN and SRRTAQNR. The tract at residues 26–64 is disordered; it reads DGTPKRKVGRPGRKRIDSEAKSRRTAQNRAAQRAFRDRK. The bZIP domain maps to 43–106; it reads SEAKSRRTAQ…KSLLSEITKY (64 aa). Positions 46-69 are basic motif; sequence KSRRTAQNRAAQRAFRDRKEAKMK. The segment at 71-99 is leucine-zipper; the sequence is LQERVELLEQKDAQNKTTTDFLLCSLKSL. A disordered region spans residues 127–156; sequence QKRENEKGTSTAVSKAAKELPSPNSDENMT. The interval 356 to 387 is c-CRD; that stretch reads CYHILEEISSLPKYSSLDIDDLCSELIIKAKC. Residues 372-379 carry the Nuclear export signal motif; that stretch reads LDIDDLCS.

Belongs to the bZIP family. YAP subfamily. As to quaternary structure, homodimer; disulfide-linked, upon oxidation. Interacts in the nucleus with the nuclear export protein CRM1. Interacts with RCK1. In terms of processing, depending on the oxidative stress inducing agent, CAD1/YAP2 can undergo two distinct conformational changes, both through oxidation of cysteine residues, and both masking the nuclear export signal, thus abolishing nuclear export by CRM1/exportin 1. Peroxide stress induces the formation of possible intramolecular disulfide bonds as well as intermolcular disulfide within a homodimer. Cadmium may bind directly to specific cysteine residues (Cys-391 and either Cys-356 or Cys-387) in the c-CRD.

The protein resides in the cytoplasm. It localises to the nucleus. Transcription activator involved in oxidative stress response and cadmium resistance. Regulates the transcription of genes overrepresented for the function of stabilizing proteins including the inducible Hsp90-family protein HSP82. Preferentially binds to promoters with the core binding site 5'-TTA[CG]TAA-3'. Activity of the transcription factor is controlled through oxidation of specific cysteine residues resulting in the alteration of its subcellular location. Activation by alkyl hydroperoxides or cadmium induces nuclear accumulation and as a result CAD1/YAP2 transcriptional activity. The polypeptide is AP-1-like transcription factor YAP2 (Saccharomyces cerevisiae (strain ATCC 204508 / S288c) (Baker's yeast)).